Here is an 889-residue protein sequence, read N- to C-terminus: Protein argonaute 15 (889 aa).

Disordered stretches follow at residues 1–26 and 119–150; these read MESH…SRKG and EDAS…RMKR. Residues 122–132 show a composition bias toward low complexity; the sequence is SSSGRTTTRRS. The region spanning 264–379 is the PAZ domain; it reads PVIEFLLFNQ…IPLELCHLVP (116 aa). In terms of domain architecture, Piwi spans 546-853; the sequence is FVLCVLPERK…AAAQVSQFVR (308 aa). The tract at residues 857–878 is disordered; it reads AASEGSGDGGAPPRPVPELPRL.

This sequence belongs to the argonaute family. Ago subfamily.

Probably involved in the RNA silencing pathway. May bind to short RNAs such as microRNAs (miRNAs) or short interfering RNAs (siRNAs), and represses the translation of mRNAs which are complementary to them. The chain is Protein argonaute 15 (AGO15) from Oryza sativa subsp. japonica (Rice).